The chain runs to 246 residues: Phosphomannomutase 2 (246 aa).

Alanine 2 carries the post-translational modification N-acetylalanine. Aspartate 12 serves as the catalytic Nucleophile. Mg(2+) is bound by residues aspartate 12 and aspartate 14. Aspartate 14 acts as the Proton donor/acceptor in catalysis. Residues arginine 21, arginine 123, arginine 134, and arginine 141 each coordinate alpha-D-mannose 1-phosphate. Lysine 149 carries the post-translational modification N6-acetyllysine. Alpha-D-mannose 1-phosphate is bound by residues serine 179 and aspartate 181. Positions 209, 221, 223, and 226 each coordinate Mg(2+).

It belongs to the eukaryotic PMM family. As to quaternary structure, homodimer.

It localises to the cytoplasm. It carries out the reaction alpha-D-mannose 1-phosphate = D-mannose 6-phosphate. It functions in the pathway nucleotide-sugar biosynthesis; GDP-alpha-D-mannose biosynthesis; alpha-D-mannose 1-phosphate from D-fructose 6-phosphate: step 2/2. Its function is as follows. Involved in the synthesis of the GDP-mannose and dolichol-phosphate-mannose required for a number of critical mannosyl transfer reactions. The sequence is that of Phosphomannomutase 2 (PMM2) from Homo sapiens (Human).